The primary structure comprises 356 residues: Dual-specificity RNA methyltransferase RlmN (356 aa).

The active-site Proton acceptor is the glutamate 92. Residues 98–334 enclose the Radical SAM core domain; that stretch reads EKDRGTLCIS…MRRTRGEDID (237 aa). The cysteines at positions 105 and 337 are disulfide-linked. Cysteine 112, cysteine 116, and cysteine 119 together coordinate [4Fe-4S] cluster. S-adenosyl-L-methionine-binding positions include 162-163, serine 194, 216-218, and asparagine 294; these read GE and SLH. Cysteine 337 serves as the catalytic S-methylcysteine intermediate.

Belongs to the radical SAM superfamily. RlmN family. [4Fe-4S] cluster serves as cofactor.

Its subcellular location is the cytoplasm. It carries out the reaction adenosine(2503) in 23S rRNA + 2 reduced [2Fe-2S]-[ferredoxin] + 2 S-adenosyl-L-methionine = 2-methyladenosine(2503) in 23S rRNA + 5'-deoxyadenosine + L-methionine + 2 oxidized [2Fe-2S]-[ferredoxin] + S-adenosyl-L-homocysteine. The enzyme catalyses adenosine(37) in tRNA + 2 reduced [2Fe-2S]-[ferredoxin] + 2 S-adenosyl-L-methionine = 2-methyladenosine(37) in tRNA + 5'-deoxyadenosine + L-methionine + 2 oxidized [2Fe-2S]-[ferredoxin] + S-adenosyl-L-homocysteine. Functionally, specifically methylates position 2 of adenine 2503 in 23S rRNA and position 2 of adenine 37 in tRNAs. m2A2503 modification seems to play a crucial role in the proofreading step occurring at the peptidyl transferase center and thus would serve to optimize ribosomal fidelity. The chain is Dual-specificity RNA methyltransferase RlmN from Vesicomyosocius okutanii subsp. Calyptogena okutanii (strain HA).